Here is a 235-residue protein sequence, read N- to C-terminus: Derlin-3 (235 aa).

Residues 1 to 22 lie on the Cytoplasmic side of the membrane; that stretch reads MAWQGLAAEFLQVPAVTRAYTA. The helical transmembrane segment at 23–43 threads the bilayer; it reads ACVLTTAAVQLELLSPFQLYF. The Lumenal portion of the chain corresponds to 44-58; the sequence is NPHLVFRKFQVWRLV. The chain crosses the membrane as a helical span at residues 59–79; sequence TNFLFFGPLGFSFFFNMLFVF. Over 80 to 98 the chain is Cytoplasmic; that stretch reads RYCRMLEEGSFRGRTADFV. Residues 99-119 traverse the membrane as a helical segment; it reads FMFLFGGVLMTLLGLLGSLFF. Over 120 to 157 the chain is Lumenal; it reads LGQALMAMLVYVWSRRSPRVRVNFFGLLTFQAPFLPWA. A helical membrane pass occupies residues 158 to 178; sequence LMGFSLLLGNSILVDLLGIAV. At 179–235 the chain is on the cytoplasmic side; that stretch reads GHIYYFLEDVFPNQPGGKRLLQTPGFLKLLLDAPAEDPNYLPLPEEQPGPHLPPPQQ. Residues 216–235 form a disordered region; the sequence is PNYLPLPEEQPGPHLPPPQQ. A compositionally biased stretch (pro residues) spans 223-235; sequence EEQPGPHLPPPQQ.

The protein belongs to the derlin family. As to quaternary structure, forms homo- and heterooligomers with DERL2 and, to a lesser extent, with DERL1. Interacts with VCP and EDEM1. Interacts with SELENOK and SELENOS. Interacts with the signal recognition particle/SRP and the SRP receptor; in the process of endoplasmic reticulum stress-induced pre-emptive quality control. As to expression, unlike DERL1 and DERL2, restricted to several tissues. Expressed at high levels in placenta, pancreas, spleen and small intestine.

Its subcellular location is the endoplasmic reticulum membrane. In terms of biological role, functional component of endoplasmic reticulum-associated degradation (ERAD) for misfolded lumenal glycoproteins, but not that of misfolded nonglycoproteins. May act by forming a channel that allows the retrotranslocation of misfolded glycoproteins into the cytosol where they are ubiquitinated and degraded by the proteasome. May mediate the interaction between VCP and the misfolded glycoproteins. May be involved in endoplasmic reticulum stress-induced pre-emptive quality control, a mechanism that selectively attenuates the translocation of newly synthesized proteins into the endoplasmic reticulum and reroutes them to the cytosol for proteasomal degradation. This is Derlin-3 from Homo sapiens (Human).